We begin with the raw amino-acid sequence, 539 residues long: Netrin-G1 (539 aa).

Residues 1–18 (MYLSRFLSIHALWVTVSS) form the signal peptide. Cystine bridges form between cysteine 33–cysteine 50, cysteine 72–cysteine 92, and cysteine 80–cysteine 88. A Laminin N-terminal domain is found at 46 to 296 (DYTACQPEST…AISDIKVRGR (251 aa)). The NGL discriminant loop I stretch occupies residues 80–91 (CAMGNPYMCNNE). The N-linked (GlcNAc...) asparagine glycan is linked to asparagine 133. The cysteines at positions 182 and 206 are disulfide-linked. The interval 208–214 (EEYSTGY) is NGL discriminant loop II. Positions 273-275 (EIF) are NGL discriminant loop III. Disulfide bonds link cysteine 297-cysteine 306, cysteine 299-cysteine 315, cysteine 317-cysteine 326, cysteine 329-cysteine 354, cysteine 364-cysteine 373, cysteine 366-cysteine 384, cysteine 387-cysteine 396, cysteine 399-cysteine 417, cysteine 420-cysteine 432, cysteine 422-cysteine 438, cysteine 440-cysteine 449, cysteine 452-cysteine 462, and cysteine 488-cysteine 497. Laminin EGF-like domains are found at residues 297–356 (CKCN…TCIP), 364–419 (CECF…VCIE), and 420–469 (CYCN…VCDN). Asparagine 320 carries an N-linked (GlcNAc...) asparagine glycan. Asparagine 406 is a glycosylation site (N-linked (GlcNAc...) asparagine). The N-linked (GlcNAc...) asparagine glycan is linked to asparagine 433. The GPI-anchor amidated serine moiety is linked to residue serine 510. Residues 511–539 (ESGQGAPPRGSPALLLLTMLLGTAGPLVF) constitute a propeptide, removed in mature form.

Post-translationally, N-glycosylated. Expression is restricted primarily to neurons of the CNS, particularly in the dorsal thalamus, olfactory bulb and inferior colliculus. Isoform 1A and isoform 1D are the major products in adult brain.

The protein localises to the cell membrane. Functionally, involved in controlling patterning and neuronal circuit formation at the laminar, cellular, subcellular and synaptic levels. Promotes neurite outgrowth of both axons and dendrites. This is Netrin-G1 (Ntng1) from Mus musculus (Mouse).